The following is a 318-amino-acid chain: RNA polymerase II transcription factor B subunit 3 (318 aa).

An RING-type zinc finger spans residues Cys-13–Cys-54.

One of the nine subunits forming the core-TFIIH basal transcription factor. Also interacts with skp1 and with the mcs2-mcs6 complex.

It is found in the cytoplasm. The protein resides in the nucleus. Functionally, acts as a component of the general transcription and DNA repair factor IIH (TFIIH or factor B), which is essential for both basal and activated transcription, and is involved in nucleotide excision repair (NER) of damaged DNA. TFIIH has CTD kinase activity and DNA-dependent ATPase activity, and is essential for polymerase II transcription. The polypeptide is RNA polymerase II transcription factor B subunit 3 (pmh1) (Schizosaccharomyces pombe (strain 972 / ATCC 24843) (Fission yeast)).